A 242-amino-acid chain; its full sequence is Beta-carotene ketolase (242 aa).

It carries out the reaction all-trans-beta-carotene + 2 AH2 + 2 O2 = echinenone + 2 A + 3 H2O. The enzyme catalyses echinenone + 2 AH2 + 2 O2 = canthaxanthin + 2 A + 3 H2O. The protein operates within carotenoid biosynthesis; astaxanthin biosynthesis. Converts beta-carotene to canthaxanthin via echinenone. The polypeptide is Beta-carotene ketolase (Paracoccus sp. (strain PC1) (Alcaligenes sp. (strain PC1))).